Consider the following 352-residue polypeptide: UDP-N-acetylglucosamine--N-acetylmuramyl-(pentapeptide) pyrophosphoryl-undecaprenol N-acetylglucosamine transferase (352 aa).

UDP-N-acetyl-alpha-D-glucosamine-binding residues include serine 195 and glutamine 287.

Belongs to the glycosyltransferase 28 family. MurG subfamily.

The protein resides in the cell membrane. It catalyses the reaction Mur2Ac(oyl-L-Ala-gamma-D-Glu-L-Lys-D-Ala-D-Ala)-di-trans,octa-cis-undecaprenyl diphosphate + UDP-N-acetyl-alpha-D-glucosamine = beta-D-GlcNAc-(1-&gt;4)-Mur2Ac(oyl-L-Ala-gamma-D-Glu-L-Lys-D-Ala-D-Ala)-di-trans,octa-cis-undecaprenyl diphosphate + UDP + H(+). Its pathway is cell wall biogenesis; peptidoglycan biosynthesis. In terms of biological role, cell wall formation. Catalyzes the transfer of a GlcNAc subunit on undecaprenyl-pyrophosphoryl-MurNAc-pentapeptide (lipid intermediate I) to form undecaprenyl-pyrophosphoryl-MurNAc-(pentapeptide)GlcNAc (lipid intermediate II). The sequence is that of UDP-N-acetylglucosamine--N-acetylmuramyl-(pentapeptide) pyrophosphoryl-undecaprenol N-acetylglucosamine transferase from Streptococcus pneumoniae (strain ATCC BAA-255 / R6).